Here is a 352-residue protein sequence, read N- to C-terminus: Alanine racemase (352 aa).

Residue lysine 33 is the Proton acceptor; specific for D-alanine of the active site. Lysine 33 is subject to N6-(pyridoxal phosphate)lysine. Arginine 129 is a substrate binding site. Residue tyrosine 250 is the Proton acceptor; specific for L-alanine of the active site. Residue methionine 298 coordinates substrate.

Belongs to the alanine racemase family. It depends on pyridoxal 5'-phosphate as a cofactor.

The catalysed reaction is L-alanine = D-alanine. It functions in the pathway amino-acid biosynthesis; D-alanine biosynthesis; D-alanine from L-alanine: step 1/1. In terms of biological role, catalyzes the interconversion of L-alanine and D-alanine. May also act on other amino acids. The polypeptide is Alanine racemase (alr) (Neisseria meningitidis serogroup B (strain ATCC BAA-335 / MC58)).